Here is a 328-residue protein sequence, read N- to C-terminus: MIYQMQMPAKIEVDEATHTDRFGRFVAQPLERGYGVTLGNVMRRALLASLPGTAITGLKIDGVFHEFSTINGVREDVPEIVLNLKKVRFRSNCKRNCKTSLVLNGQKEFTAGDIIAQEGEFEVLNKDLHIATVNEGATLKIDIFVGRGRGYLPSEENRPDGMPIGFIAIDAIFTPIRNVKFTVENTRVGQRTDYEKMILDVETDGSITPDDSISLAGKIINEHVTFFADFSPTEEEFTEEEFKQQDDEFENMRKLFNTKIEDLDLSVRSHNCLRLAEIDTIGDLVSRKEDELLNYKNFGKKSLTELKEQLEKFDLKFGMDITKYQMKG.

Residues 1–231 are alpha N-terminal domain (alpha-NTD); it reads MIYQMQMPAK…EHVTFFADFS (231 aa). Residues 252-328 are alpha C-terminal domain (alpha-CTD); the sequence is MRKLFNTKIE…MDITKYQMKG (77 aa).

Belongs to the RNA polymerase alpha chain family. Homodimer. The RNAP catalytic core consists of 2 alpha, 1 beta, 1 beta' and 1 omega subunit. When a sigma factor is associated with the core the holoenzyme is formed, which can initiate transcription.

It carries out the reaction RNA(n) + a ribonucleoside 5'-triphosphate = RNA(n+1) + diphosphate. DNA-dependent RNA polymerase catalyzes the transcription of DNA into RNA using the four ribonucleoside triphosphates as substrates. The sequence is that of DNA-directed RNA polymerase subunit alpha from Chlorobium limicola (strain DSM 245 / NBRC 103803 / 6330).